Here is a 338-residue protein sequence, read N- to C-terminus: Glycerol-3-phosphate dehydrogenase [NAD(P)+] (338 aa).

Residues S13, W14, and K108 each contribute to the NADPH site. Positions 108, 139, and 141 each coordinate sn-glycerol 3-phosphate. A143 is an NADPH binding site. Positions 194, 247, 257, 258, and 259 each coordinate sn-glycerol 3-phosphate. K194 functions as the Proton acceptor in the catalytic mechanism. Residue R258 coordinates NADPH. NADPH-binding residues include V282 and E284.

Belongs to the NAD-dependent glycerol-3-phosphate dehydrogenase family.

The protein resides in the cytoplasm. The catalysed reaction is sn-glycerol 3-phosphate + NAD(+) = dihydroxyacetone phosphate + NADH + H(+). It carries out the reaction sn-glycerol 3-phosphate + NADP(+) = dihydroxyacetone phosphate + NADPH + H(+). It functions in the pathway membrane lipid metabolism; glycerophospholipid metabolism. Catalyzes the reduction of the glycolytic intermediate dihydroxyacetone phosphate (DHAP) to sn-glycerol 3-phosphate (G3P), the key precursor for phospholipid synthesis. In Streptococcus uberis (strain ATCC BAA-854 / 0140J), this protein is Glycerol-3-phosphate dehydrogenase [NAD(P)+].